Consider the following 178-residue polypeptide: Interleukin-10 (178 aa).

Residues 1 to 18 form the signal peptide; that stretch reads MHSSALLCCLVLLTGVRA. 2 cysteine pairs are disulfide-bonded: Cys-30–Cys-126 and Cys-80–Cys-132. An N-linked (GlcNAc...) asparagine glycan is attached at Asn-134.

Belongs to the IL-10 family. As to quaternary structure, homodimer. Interacts with IL10RA and IL10RB.

Its subcellular location is the secreted. Functionally, major immune regulatory cytokine that acts on many cells of the immune system where it has profound anti-inflammatory functions, limiting excessive tissue disruption caused by inflammation. Mechanistically, IL10 binds to its heterotetrameric receptor comprising IL10RA and IL10RB leading to JAK1 and STAT2-mediated phosphorylation of STAT3. In turn, STAT3 translocates to the nucleus where it drives expression of anti-inflammatory mediators. Targets antigen-presenting cells (APCs) such as macrophages and monocytes and inhibits their release of pro-inflammatory cytokines including granulocyte-macrophage colony-stimulating factor /GM-CSF, granulocyte colony-stimulating factor/G-CSF, IL-1 alpha, IL-1 beta, IL-6, IL-8 and TNF-alpha. Also interferes with antigen presentation by reducing the expression of MHC-class II and co-stimulatory molecules, thereby inhibiting their ability to induce T cell activation. In addition, controls the inflammatory response of macrophages by reprogramming essential metabolic pathways including mTOR signaling. The chain is Interleukin-10 (IL10) from Cercocebus atys (Sooty mangabey).